A 123-amino-acid chain; its full sequence is Large ribosomal subunit protein uL14 (123 aa).

Belongs to the universal ribosomal protein uL14 family. In terms of assembly, part of the 50S ribosomal subunit. Forms a cluster with proteins L3 and L19. In the 70S ribosome, L14 and L19 interact and together make contacts with the 16S rRNA in bridges B5 and B8.

Functionally, binds to 23S rRNA. Forms part of two intersubunit bridges in the 70S ribosome. In Escherichia coli O6:K15:H31 (strain 536 / UPEC), this protein is Large ribosomal subunit protein uL14.